Consider the following 159-residue polypeptide: Small heat shock protein hspM (159 aa).

The sHSP domain maps to 1–159; it reads MFVLNFELAG…LSNNIKIQIN (159 aa). Residues 35 to 101 form a disordered region; that stretch reads MNNNNKNNLQ…NNNNKSSKTN (67 aa). 2 stretches are compositionally biased toward low complexity: residues 36–46 and 61–95; these read NNNNKNNLQIN and SSSS…NNNN.

This sequence belongs to the small heat shock protein (HSP20) family.

This chain is Small heat shock protein hspM (hspM), found in Dictyostelium discoideum (Social amoeba).